Reading from the N-terminus, the 161-residue chain is SsrA-binding protein (161 aa).

Belongs to the SmpB family.

Its subcellular location is the cytoplasm. Functionally, required for rescue of stalled ribosomes mediated by trans-translation. Binds to transfer-messenger RNA (tmRNA), required for stable association of tmRNA with ribosomes. tmRNA and SmpB together mimic tRNA shape, replacing the anticodon stem-loop with SmpB. tmRNA is encoded by the ssrA gene; the 2 termini fold to resemble tRNA(Ala) and it encodes a 'tag peptide', a short internal open reading frame. During trans-translation Ala-aminoacylated tmRNA acts like a tRNA, entering the A-site of stalled ribosomes, displacing the stalled mRNA. The ribosome then switches to translate the ORF on the tmRNA; the nascent peptide is terminated with the 'tag peptide' encoded by the tmRNA and targeted for degradation. The ribosome is freed to recommence translation, which seems to be the essential function of trans-translation. The polypeptide is SsrA-binding protein (Vesicomyosocius okutanii subsp. Calyptogena okutanii (strain HA)).